We begin with the raw amino-acid sequence, 607 residues long: Methylmalonate-semialdehyde dehydrogenase [acylating], mitochondrial (607 aa).

Residues 1–69 (MVRVKQKNLE…KLRSSSSTTT (69 aa)) are disordered. Residues 1–98 (MVRVKQKNLE…QFLALRSSWL (98 aa)) constitute a mitochondrion transit peptide. Positions 9–30 (LESYRSNGTYPPTWRNPTTSFA) are enriched in polar residues. A compositionally biased stretch (basic residues) spans 42–51 (LKSKTKRRRL). Residues F259, K283, E286, K287, and S336 each coordinate NAD(+). Residue C391 is the Nucleophile of the active site. E491 is a binding site for NAD(+).

This sequence belongs to the aldehyde dehydrogenase family.

It is found in the mitochondrion. It carries out the reaction 2-methyl-3-oxopropanoate + NAD(+) + CoA + H2O = propanoyl-CoA + hydrogencarbonate + NADH + H(+). The sequence is that of Methylmalonate-semialdehyde dehydrogenase [acylating], mitochondrial (ALDH6B2) from Arabidopsis thaliana (Mouse-ear cress).